Consider the following 514-residue polypeptide: Cytochrome P450 monooxygenase FUS8 (514 aa).

A helical transmembrane segment spans residues Leu-28–Phe-48. Asn-225 and Asn-443 each carry an N-linked (GlcNAc...) asparagine glycan. Cys-460 contacts heme.

It belongs to the cytochrome P450 family. The cofactor is heme.

It localises to the membrane. The protein operates within mycotoxin biosynthesis. Its function is as follows. Cytochrome P450 monooxygenase; part of the gene cluster that mediates the biosynthesis of the mycotoxin fusarin C. Within the cluster, FUS1, FUS2, FUS8 and FUS9 are sufficient for fusarin production. The roles of the other FUS members are yet undetermined. The fusarin C synthetase FUS1 is responsible for the condensation of one acetyl-coenzyme A (CoA) unit with six malonyl-CoA units and the amide linkage of the arising heptaketide and homoserine, subsequently releasing the first intermediate, prefusarin, as an alcohol with an open ring structure. The cytochrome P450 monooxygenase FUS8 participates in multiple oxidation processes at carbon C-20 and is able to use the FUS1 product as substrate, resulting in formation of 20-hydroxy-prefusarin. This reaction seems to be essential before the 2-pyrrolidone ring closure can be catalyzed by FUS2, generating 20-hydroxy-fusarin. FUS8 is able to further oxidizes carbon C-20 after ring closure, resulting in the formation of carboxy-fusarin C. As the last step, FUS9 methylates the hydroxyl group at C-21 to generate fusarin C. Fusarin C can then rearrange to epi-fusarin C, the (z)-isomers, and fusarin A and fusarin D. The chain is Cytochrome P450 monooxygenase FUS8 from Gibberella moniliformis (strain M3125 / FGSC 7600) (Maize ear and stalk rot fungus).